The primary structure comprises 350 residues: Methionine import ATP-binding protein MetN (350 aa).

Positions 2 to 241 (IQIKNLKKEY…PQAPVTRSFV (240 aa)) constitute an ABC transporter domain. An ATP-binding site is contributed by 38–45 (GHSGAGKS).

This sequence belongs to the ABC transporter superfamily. Methionine importer (TC 3.A.1.24) family. The complex is composed of two ATP-binding proteins (MetN), two transmembrane proteins (MetI) and a solute-binding protein (MetQ).

The protein resides in the cell inner membrane. It catalyses the reaction L-methionine(out) + ATP + H2O = L-methionine(in) + ADP + phosphate + H(+). The enzyme catalyses D-methionine(out) + ATP + H2O = D-methionine(in) + ADP + phosphate + H(+). Part of the ABC transporter complex MetNIQ involved in methionine import. Responsible for energy coupling to the transport system. The chain is Methionine import ATP-binding protein MetN from Francisella tularensis subsp. tularensis (strain FSC 198).